A 1378-amino-acid chain; its full sequence is Carboxypeptidase D (1378 aa).

The signal sequence occupies residues 1-37; that stretch reads MASGWDERPPWRLESLRLLPPPPLLLLLLLLRSSAQA. Residues 38–1297 lie on the Extracellular side of the membrane; it reads AHIKKAEATT…DNRIFGLPRE (1260 aa). One can recognise a Peptidase M14 1 domain in the interval 62-380; it reads HYYHEAALGE…ESLITLIEKV (319 aa). Positions 139 and 142 each coordinate Zn(2+). A Cell attachment site motif is present at residues 162-164; sequence RGD. 2 N-linked (GlcNAc...) asparagine glycosylation sites follow: N172 and N217. Residues 189 to 232 form a disordered region; that stretch reads RAREGDCGLGDSGPPGTSGRDNSRGRDLNRSFPDQFSTGEPPSL. Residue H257 coordinates Zn(2+). The residue at position 265 (Y265) is a Phosphotyrosine. S270 bears the Phosphoserine mark. E350 functions as the Proton donor/acceptor in the catalytic mechanism. 4 N-linked (GlcNAc...) asparagine glycosylation sites follow: N399, N410, N429, and N522. Residues 502 to 792 form the Peptidase M14 2 domain; it reads HHHHFPDMEI…RSLIQFMKQV (291 aa). H564 and E567 together coordinate Zn(2+). N626 is a glycosylation site (N-linked (GlcNAc...) asparagine). Residue H671 coordinates Zn(2+). E762 serves as the catalytic Proton donor/acceptor. 6 N-linked (GlcNAc...) asparagine glycosylation sites follow: N811, N855, N867, N879, N953, and N976. Positions 875-898 are disordered; it reads TDANNESKKGKGHSTSTDDTSDPT. The 280-residue stretch at 930-1209 folds into the Peptidase M14 3 domain; it reads RYHSYKDLSE…KSLLSMLVEV (280 aa). The segment covering 1039–1048 has biased composition (basic and acidic residues); it reads RERAQEKDCT. Residues 1039 to 1068 form a disordered region; the sequence is RERAQEKDCTSKTGHTNARGRDLDTDFTSN. Residues N1068 and N1140 are each glycosylated (N-linked (GlcNAc...) asparagine). Residues 1298–1318 traverse the membrane as a helical segment; that stretch reads LVVTVSGATMSALILTACIIW. 3 S-palmitoyl cysteine lipidation sites follow: C1315, C1319, and C1321. At 1319-1378 the chain is on the cytoplasmic side; it reads CICSIKSNRHKDGFHRLRQHHDEYEDEIRMMSTGSKKSLLSHEFQDETDTEEETLYSSKH. 2 positions are modified to phosphoserine: S1356 and S1359. A disordered region spans residues 1357–1378; the sequence is LLSHEFQDETDTEEETLYSSKH. Phosphothreonine is present on residues T1366 and T1368.

Belongs to the peptidase M14 family. The cofactor is Zn(2+). Isoform 1 is widely expressed with highest levels in the hippocampus, spinal cord, atrium, colon, testis and ovaries. Detected in the liver of females but not males. Isoform 2 is not detected in brain or lung.

It localises to the cell membrane. Its subcellular location is the nucleus. The enzyme catalyses Releases C-terminal Arg and Lys from polypeptides.. In Rattus norvegicus (Rat), this protein is Carboxypeptidase D.